We begin with the raw amino-acid sequence, 492 residues long: Cyclic di-GMP phosphodiesterase VC_1295 (492 aa).

The next 6 membrane-spanning stretches (helical) occupy residues 14–34 (IYHA…FALY), 49–69 (EIAT…HTLL), 80–100 (FIQL…LYYN), 111–131 (LKVL…LQLS), 160–180 (LIGL…MVAI), and 205–225 (EFAF…VLWS). The HAMP domain occupies 226-278 (RMMKEILDHQERSLQAVTQGNLQVRLPVYSNDELGNVAMLTNQMLDSLEATQN). Residues 280 to 490 (VKTTRDVAIV…FVAIAAHFKD (211 aa)) enclose the HD-GYP domain.

It is found in the cell inner membrane. It catalyses the reaction 3',3'-c-di-GMP + 2 H2O = 2 GMP + 2 H(+). Phosphodiesterase (PDE) that catalyzes the hydrolysis of cyclic diguanylate (c-di-GMP) to GMP in vitro. Increases motility and decreases biofilm formation in vivo. The protein is Cyclic di-GMP phosphodiesterase VC_1295 of Vibrio cholerae serotype O1 (strain ATCC 39315 / El Tor Inaba N16961).